We begin with the raw amino-acid sequence, 389 residues long: Alkanesulfonate monooxygenase (389 aa).

Belongs to the SsuD family.

The enzyme catalyses an alkanesulfonate + FMNH2 + O2 = an aldehyde + FMN + sulfite + H2O + 2 H(+). Functionally, catalyzes the desulfonation of aliphatic sulfonates. In Variovorax paradoxus (strain S110), this protein is Alkanesulfonate monooxygenase.